We begin with the raw amino-acid sequence, 404 residues long: Glycosylated lysosomal membrane protein B (404 aa).

The first 24 residues, 1-24 (MSCTRGWRLILLGLLCVGLLGTRG), serve as a signal peptide directing secretion. The Lumenal segment spans residues 25 to 364 (QDESRKVSVQ…YGDPPRDSFS (340 aa)). Asparagine 85, asparagine 124, asparagine 128, asparagine 142, asparagine 152, asparagine 156, asparagine 163, asparagine 168, asparagine 178, asparagine 189, asparagine 205, asparagine 221, asparagine 266, asparagine 303, and asparagine 330 each carry an N-linked (GlcNAc...) asparagine glycan. The chain crosses the membrane as a helical span at residues 365-385 (ILVICIMAVALGTPLLLLIIG). Topologically, residues 386 to 404 (TVLVTAVRHKVYPNYQPIN) are cytoplasmic. Residues 400-404 (YQPIN) carry the Lysosomal targeting motif motif.

Belongs to the GLMP family. As to quaternary structure, interacts (via lumenal domain) with lysosomal protein MFSD1; the interaction starts while both proteins are still in the endoplasmic reticulum and is required for stabilization of MFSD1 in lysosomes but has no direct effect on its targeting to lysosomes or transporter activity.

The protein resides in the lysosome membrane. Required to protect lysosomal transporter MFSD1 from lysosomal proteolysis and for MFSD1 lysosomal localization. This Xenopus laevis (African clawed frog) protein is Glycosylated lysosomal membrane protein B (glmp-b).